A 269-amino-acid polypeptide reads, in one-letter code: Aminoglycoside (3'') (9) adenylyltransferase (269 aa).

It carries out the reaction streptomycin + ATP = 3''-O-adenylylstreptomycin + diphosphate. The enzyme catalyses spectinomycin + ATP = 9-O-adenylylspectinomycin + diphosphate. Mediates bacterial resistance to the antibiotic spectinomycin and probably also to streptomycin. In Rhizobium radiobacter (Agrobacterium tumefaciens), this protein is Aminoglycoside (3'') (9) adenylyltransferase.